The sequence spans 192 residues: Dynein axonemal light chain 1 (192 aa).

LRR repeat units follow at residues 49-70, 71-92, 94-115, and 116-137; these read NCER…NGLK, NLKI…EAVG, TLEE…HVMK, and KLKV…LKLA. The 43-residue stretch at 150–192 folds into the LRRCT domain; the sequence is NPLEEKYSADGNWIEEATKRLPKLKKLDGNPVIKQEEETEGES.

Belongs to the dynein light chain LC1-type family. As to quaternary structure, interacts with DNAH5, a outer arm dynein heavy chain. Interacts with tubulin located within the A-tubule of the outer doublets in a ATP-independent manner.

The protein localises to the cytoplasm. The protein resides in the cytoskeleton. It is found in the cilium axoneme. In terms of biological role, part of the multisubunit axonemal ATPase complexes that generate the force for cilia motility and govern beat frequency. Component of the outer arm dynein (ODA). May be involved in a mechanosensory feedback mechanism controlling ODA activity based on external conformational cues by tethering the outer arm dynein heavy chain (DNAH5) to the microtubule within the axoneme. This chain is Dynein axonemal light chain 1 (dnal1), found in Danio rerio (Zebrafish).